Reading from the N-terminus, the 307-residue chain is UDP-N-acetylenolpyruvoylglucosamine reductase (307 aa).

In terms of domain architecture, FAD-binding PCMH-type spans 33-198 (KVGGPVDILV…LEAILKLSLG (166 aa)). The active site involves Arg177. Catalysis depends on Ser227, which acts as the Proton donor. Glu297 is a catalytic residue.

The protein belongs to the MurB family. Requires FAD as cofactor.

It localises to the cytoplasm. It catalyses the reaction UDP-N-acetyl-alpha-D-muramate + NADP(+) = UDP-N-acetyl-3-O-(1-carboxyvinyl)-alpha-D-glucosamine + NADPH + H(+). It participates in cell wall biogenesis; peptidoglycan biosynthesis. Functionally, cell wall formation. The protein is UDP-N-acetylenolpyruvoylglucosamine reductase of Clostridium tetani (strain Massachusetts / E88).